The primary structure comprises 748 residues: Bifunctional lysine-specific demethylase and histidyl-hydroxylase NO66 (748 aa).

Disordered stretches follow at residues 65 to 135 (NIDR…RSTY) and 160 to 264 (TEVV…DDEG). Basic and acidic residues predominate over residues 94–110 (LENKKPKVEVKKEDEKS). The span at 124–134 (LVQNETSTRST) shows a compositional bias: polar residues. A compositionally biased stretch (acidic residues) spans 163 to 193 (VESDDEQMIGLDSDEELEDEDETDIDEDEMM). Residues 194 to 203 (IDPKDIERYI) are compositionally biased toward basic and acidic residues. Acidic residues predominate over residues 207–264 (SVEDEEDMEDEEIEDEEFEDEEFEDEEEEADEQEEEEEDVSDEESVVSEMDADSDDEG). Residues 399 to 543 (QLVNPQTYDD…NLMEKVVPEA (145 aa)) enclose the JmjC domain. Fe cation-binding residues include histidine 442, aspartate 444, and histidine 509.

Belongs to the ROX family. NO66 subfamily. Requires Fe(2+) as cofactor.

It localises to the nucleus. The catalysed reaction is N(6),N(6)-dimethyl-L-lysyl(36)-[histone H3] + 2 2-oxoglutarate + 2 O2 = L-lysyl(36)-[histone H3] + 2 formaldehyde + 2 succinate + 2 CO2. In terms of biological role, oxygenase that can act as both a histone lysine demethylase and a ribosomal histidine hydroxylase. Specifically demethylates 'Lys-4' (H3K4me) and 'Lys-36' (H3K36me) of histone H3, thereby playing a central role in histone code. Mediates response to multiple stress stimuli, including heat shock and osmotic, oxidative, and ethanol stress. The chain is Bifunctional lysine-specific demethylase and histidyl-hydroxylase NO66 (jmjc-1) from Caenorhabditis elegans.